A 336-amino-acid polypeptide reads, in one-letter code: Prenytransferase ascA (336 aa).

Residues 1-26 form a disordered region; that stretch reads MAAKSRSPKRGTSEKTPLVEKEAPYQ. The segment covering 11 to 23 has biased composition (basic and acidic residues); it reads GTSEKTPLVEKEA. 8 consecutive transmembrane segments (helical) span residues 52-72, 74-94, 131-151, 179-199, 206-226, 251-271, 272-292, and 314-334; these read PHGN…ASAI, PTEL…TFLM, GHVF…SLPI, VILG…VGLP, FVPT…YDVV, LEGL…TLGY, LVGM…FGLV, and FAIL…DYVV.

Belongs to the UbiA prenyltransferase family. Mg(2+) is required as a cofactor.

Its subcellular location is the membrane. It catalyses the reaction orsellinate + (2E,6E)-farnesyl diphosphate = ilicicolinate B + diphosphate. It participates in secondary metabolite biosynthesis; terpenoid biosynthesis. Its function is as follows. Prenytransferase; part of the asc-1 gene cluster that mediates the biosynthesis of both ascochlorin and ascofuranone, a strong inhibitor of cyanide-insensitive alternative oxidases and a promising drug candidate against African trypanosomiasis. The first step in the pathway is performed by the non-reducing polyketide synthase ascC that produces orsellinic acid by condensing acetyl-CoA with 3 malonyl-CoA units. Orsellinic acid is then prenylated by the prenyltransferase ascA to yield ilicicolinic acid B. Ilicicolinic acid B is further reduced to ilicicolin B by the reductase ascB. The halogenase ascD then chlorinates ilicicolin B to produce ilicicolin A which is converted to ilicicolin A epoxide by the cytochrome P450 monooxygenase ascE that catalyzes stereoselective epoxidation of the terminal double bond of the prenyl group. Ilicicolin A epoxide is the last common precursor for the biosynthesis of ascofuranone and ascochlorin. The terpene cyclase ascF produces a monocyclic terpene, and the cyclization reaction is proposed to be initiated by protonation of the terminal epoxide of ilicicolin A epoxide to generate a monocyclic tertiarycation, which is followed by a series of hydride and methyl shifts with abstraction of proton, leading to the formation of the (14S,15R,19R)-trimethylcyclohexanone ring structure of ilicicolin C, which is finally reduced to ascochlorin by the dehydrogenase ascG. On the other hand, ilicicolin A epoxide is hydroxylated by the cytochrome P450 monooxygenase ascH, and the resultant product is cyclized by the terpene cyclase ascI to ascofuranol via protonation-initiated epoxide ring opening, which facilitates the 6-endo-tet cyclization to form the tetrahy-drofuran ring. Finally, ascofuranol is oxidized into ascofuranone by ascJ. The polypeptide is Prenytransferase ascA (Acremonium egyptiacum (Oospora egyptiaca)).